Here is a 391-residue protein sequence, read N- to C-terminus: Response regulator aspartate phosphatase I (391 aa).

TPR repeat units follow at residues 62–95 (LEFRHEIMLSYMKSKEIEDLNNAYETIKEIEKQG), 150–183 (SYVYYYMKQTYFSMNYANRALKIFREYEEYAVQT), 184–217 (VRCQFIVAGNLIDSLEYERALEQFLKSLEISKES), 224–257 (AMSHMNIGICYDELKEYKKASQHLILALEIFEKS), 275–311 (KQQNYNVALIYFRKGRFIADKSDDKEYSAKFKILEGL), and 338–371 (ENFSIEVADYFHEQGNLMLSNEYYRMSIEARRKI).

It belongs to the Rap family.

It is found in the cytoplasm. Its activity is regulated as follows. Inhibited by PhrI. Its function is as follows. Activates ICEBs1 gene expression, excision and transfer by inactivating the ICEBs1 repressor protein ImmR. RapI-mediated induction likely results from an increase in the specific activity of the protease ImmA, which mediates proteolysis of ImmR. In addition, is involved in regulation of sporulation. Acts as a phosphatase that specifically dephosphorylates the sporulation initiation phosphotransferase Spo0F and inhibits its activity. This is Response regulator aspartate phosphatase I (rapI) from Bacillus subtilis (strain 168).